Consider the following 440-residue polypeptide: Xylose isomerase (440 aa).

Catalysis depends on residues histidine 101 and aspartate 104. Mg(2+) contacts are provided by glutamate 232, glutamate 268, histidine 271, aspartate 296, aspartate 307, aspartate 309, and aspartate 339.

This sequence belongs to the xylose isomerase family. As to quaternary structure, homotetramer. The cofactor is Mg(2+).

The protein resides in the cytoplasm. The catalysed reaction is alpha-D-xylose = alpha-D-xylulofuranose. In Salmonella typhi, this protein is Xylose isomerase.